The following is a 710-amino-acid chain: Integrator complex subunit 10 (710 aa).

3 positions are modified to phosphoserine: serine 231, serine 381, and serine 382. Residue lysine 464 forms a Glycyl lysine isopeptide (Lys-Gly) (interchain with G-Cter in SUMO2) linkage.

Belongs to the Integrator subunit 10 family. As to quaternary structure, component of the Integrator complex, composed of core subunits INTS1, INTS2, INTS3, INTS4, INTS5, INTS6, INTS7, INTS8, INTS9/RC74, INTS10, INTS11/CPSF3L, INTS12, INTS13, INTS14 and INTS15. The core complex associates with protein phosphatase 2A subunits PPP2CA and PPP2R1A, to form the Integrator-PP2A (INTAC) complex. INTS10 is part of the tail subcomplex, composed of INTS10, INTS13, INTS14 and INTS15.

The protein resides in the nucleus. In terms of biological role, component of the integrator complex, a multiprotein complex that terminates RNA polymerase II (Pol II) transcription in the promoter-proximal region of genes. The integrator complex provides a quality checkpoint during transcription elongation by driving premature transcription termination of transcripts that are unfavorably configured for transcriptional elongation: the complex terminates transcription by (1) catalyzing dephosphorylation of the C-terminal domain (CTD) of Pol II subunit POLR2A/RPB1 and SUPT5H/SPT5, (2) degrading the exiting nascent RNA transcript via endonuclease activity and (3) promoting the release of Pol II from bound DNA. The integrator complex is also involved in terminating the synthesis of non-coding Pol II transcripts, such as enhancer RNAs (eRNAs), small nuclear RNAs (snRNAs), telomerase RNAs and long non-coding RNAs (lncRNAs). Within the integrator complex, INTS10 is part of the integrator tail module that acts as a platform for the recruitment of transcription factors at promoters. May be not involved in the recruitment of cytoplasmic dynein to the nuclear envelope, probably as component of the integrator complex. This chain is Integrator complex subunit 10, found in Homo sapiens (Human).